A 166-amino-acid polypeptide reads, in one-letter code: Interleukin-2 (166 aa).

The N-terminal stretch at 1–20 (MYSMQLASCVTLTLVLLVNS) is a signal peptide. O-linked (GalNAc...) threonine glycosylation occurs at threonine 23. An intrachain disulfide couples cysteine 89 to cysteine 137.

The protein belongs to the IL-2 family.

Its subcellular location is the secreted. Its function is as follows. Cytokine produced by activated CD4-positive helper T-cells and to a lesser extend activated CD8-positive T-cells and natural killer (NK) cells that plays pivotal roles in the immune response and tolerance. Binds to a receptor complex composed of either the high-affinity trimeric IL-2R (IL2RA/CD25, IL2RB/CD122 and IL2RG/CD132) or the low-affinity dimeric IL-2R (IL2RB and IL2RG). Interaction with the receptor leads to oligomerization and conformation changes in the IL-2R subunits resulting in downstream signaling starting with phosphorylation of JAK1 and JAK3. In turn, JAK1 and JAK3 phosphorylate the receptor to form a docking site leading to the phosphorylation of several substrates including STAT5. This process leads to activation of several pathways including STAT, phosphoinositide-3-kinase/PI3K and mitogen-activated protein kinase/MAPK pathways. Functions as a T-cell growth factor and can increase NK-cell cytolytic activity as well. Promotes strong proliferation of activated B-cells and subsequently immunoglobulin production. Plays a pivotal role in regulating the adaptive immune system by controlling the survival and proliferation of regulatory T-cells, which are required for the maintenance of immune tolerance. Moreover, participates in the differentiation and homeostasis of effector T-cell subsets, including Th1, Th2, Th17 as well as memory CD8-positive T-cells. The protein is Interleukin-2 (Il2) of Mus spretus (Western Mediterranean mouse).